Reading from the N-terminus, the 577-residue chain is Chaperonin CPN60-1, mitochondrial (577 aa).

The N-terminal 34 residues, Met-1–Tyr-34, are a transit peptide targeting the mitochondrion.

Belongs to the chaperonin (HSP60) family.

It localises to the mitochondrion. In terms of biological role, implicated in mitochondrial protein import and macromolecular assembly. May facilitate the correct folding of imported proteins. May also prevent misfolding and promote the refolding and proper assembly of unfolded polypeptides generated under stress conditions in the mitochondrial matrix. The chain is Chaperonin CPN60-1, mitochondrial (CPN60I) from Zea mays (Maize).